The sequence spans 473 residues: MKTLYSLRRFYHVETLFNGTLALAGRDQETTGFAWWAGNARLINLSGKLLGAHVAHAGLIVFWAGAMNLFEVAHFVPEKPMYEQGLILLPHLATLGWGVGPGGEVIDTFPYFVSGVLHLISSAVLGFGGIYHALLGPETLEESFPFFGYVWKDRNKMTTILGIHLILLGVGAFLLVFKALYFGGVYDTWAPGGGDVRKITNLTLSPSVIFGYLLKSPFGGEGWIVSVDDLEDIIGGHVWLGSICIFGGIWHILTKPFAWARRALVWSGEAYLSYSLAALSVCGFIACCFVWFNNTAYPSEFYGPTGPEASQAQAFTFLVRDQRLGANVGSAQGPTGLGKYLMRSPTGEVIFGGETMRFWDLRAPWLEPLRGPNGLDLSRLKKDIQPWQERRSAEYMTHAPLGSLNSVGGVATEINAVNYVSPRSWLSTSHFVLGFFLFVGHLWHAGRARAAAAGFEKGIDRDFEPVLSMTPLN.

The propeptide occupies 1–14; that stretch reads MKTLYSLRRFYHVE. Thr15 bears the N-acetylthreonine mark. Thr15 carries the phosphothreonine modification. The next 5 membrane-spanning stretches (helical) occupy residues 69-93, 134-155, 178-200, 255-275, and 291-312; these read LFEV…PHLA, LLGP…KDRN, KALY…RKIT, KPFA…LSYS, and WFNN…ASQA. Glu367 is a [CaMn4O5] cluster binding site. The chain crosses the membrane as a helical span at residues 447–471; the sequence is RARAAAAGFEKGIDRDFEPVLSMTP.

Belongs to the PsbB/PsbC family. PsbC subfamily. PSII is composed of 1 copy each of membrane proteins PsbA, PsbB, PsbC, PsbD, PsbE, PsbF, PsbH, PsbI, PsbJ, PsbK, PsbL, PsbM, PsbT, PsbX, PsbY, PsbZ, Psb30/Ycf12, at least 3 peripheral proteins of the oxygen-evolving complex and a large number of cofactors. It forms dimeric complexes. The cofactor is Binds multiple chlorophylls and provides some of the ligands for the Ca-4Mn-5O cluster of the oxygen-evolving complex. It may also provide a ligand for a Cl- that is required for oxygen evolution. PSII binds additional chlorophylls, carotenoids and specific lipids..

The protein localises to the plastid. The protein resides in the chloroplast thylakoid membrane. Its function is as follows. One of the components of the core complex of photosystem II (PSII). It binds chlorophyll and helps catalyze the primary light-induced photochemical processes of PSII. PSII is a light-driven water:plastoquinone oxidoreductase, using light energy to abstract electrons from H(2)O, generating O(2) and a proton gradient subsequently used for ATP formation. This Draba nemorosa (Woodland whitlowgrass) protein is Photosystem II CP43 reaction center protein.